We begin with the raw amino-acid sequence, 268 residues long: MLRIAGRKLSSSAAARSSSAFFTRNPFTFTDDSSSPTRSPSPTSLASQFLDQFRGFSSNSVSPAHQTGLVSDLPATVAAIKNPSSKIVYDDSNHERYPPGDPSKRAFAYFVLTGGRFVYASLVRLLILKFVLSMSASKDVLALASLEVDLSSIEPGTTVTVKWRGKPVFIRRRTDEDINLANSVDLGSLRDPQQDAERVKNPEWLVVIGVCTHLGCIPLPNAGDFGGWFCPCHGSHYDISGRIRKGPAPYNLEVPTYSFMEENKLLIG.

A mitochondrion-targeting transit peptide spans 1-56 (MLRIAGRKLSSSAAARSSSAFFTRNPFTFTDDSSSPTRSPSPTSLASQFLDQFRGF). Residues 57–105 (SSNSVSPAHQTGLVSDLPATVAAIKNPSSKIVYDDSNHERYPPGDPSKR) lie on the Mitochondrial matrix side of the membrane. Residues 106–128 (AFAYFVLTGGRFVYASLVRLLIL) form a helical membrane-spanning segment. The Mitochondrial intermembrane segment spans residues 129 to 268 (KFVLSMSASK…FMEENKLLIG (140 aa)). Residues 178-266 (INLANSVDLG…YSFMEENKLL (89 aa)) enclose the Rieske domain. [2Fe-2S] cluster-binding residues include Cys-211, His-213, Cys-230, and His-233. Cys-216 and Cys-232 are joined by a disulfide.

It belongs to the Rieske iron-sulfur protein family. In terms of assembly, component of the ubiquinol-cytochrome c oxidoreductase (cytochrome b-c1 complex, complex III, CIII), a multisubunit enzyme composed of 3 respiratory subunits cytochrome b, cytochrome c1 and Rieske protein, 2 core protein subunits, and several low-molecular weight protein subunits. The complex exists as an obligatory dimer and forms supercomplexes (SCs) in the inner mitochondrial membrane with cytochrome c oxidase (complex IV, CIV). The cofactor is [2Fe-2S] cluster. In terms of tissue distribution, high levels are seen in the flowers while a low level expression is seen in the roots, leaves and stems.

The protein resides in the mitochondrion inner membrane. The enzyme catalyses a quinol + 2 Fe(III)-[cytochrome c](out) = a quinone + 2 Fe(II)-[cytochrome c](out) + 2 H(+)(out). Functionally, component of the ubiquinol-cytochrome c oxidoreductase, a multisubunit transmembrane complex that is part of the mitochondrial electron transport chain which drives oxidative phosphorylation. The respiratory chain contains 3 multisubunit complexes succinate dehydrogenase (complex II, CII), ubiquinol-cytochrome c oxidoreductase (cytochrome b-c1 complex, complex III, CIII) and cytochrome c oxidase (complex IV, CIV), that cooperate to transfer electrons derived from NADH and succinate to molecular oxygen, creating an electrochemical gradient over the inner membrane that drives transmembrane transport and the ATP synthase. The cytochrome b-c1 complex catalyzes electron transfer from ubiquinol to cytochrome c, linking this redox reaction to translocation of protons across the mitochondrial inner membrane, with protons being carried across the membrane as hydrogens on the quinol. In the process called Q cycle, 2 protons are consumed from the matrix, 4 protons are released into the intermembrane space and 2 electrons are passed to cytochrome c. The Rieske protein is a catalytic core subunit containing a [2Fe-2S] iron-sulfur cluster. It cycles between 2 conformational states during catalysis to transfer electrons from the quinol bound in the Q(0) site in cytochrome b to cytochrome c1. The protein is Cytochrome b-c1 complex subunit Rieske-5, mitochondrial of Nicotiana tabacum (Common tobacco).